The primary structure comprises 480 residues: Glutamate--tRNA ligase (480 aa).

Positions 21 to 31 (PSPTGYLHVGG) match the 'HIGH' region motif. Zn(2+) is bound by residues cysteine 110, cysteine 112, cysteine 137, and histidine 139. Residues 248 to 252 (KLSKR) carry the 'KMSKS' region motif. An ATP-binding site is contributed by lysine 251.

Belongs to the class-I aminoacyl-tRNA synthetase family. Glutamate--tRNA ligase type 1 subfamily. As to quaternary structure, monomer. Requires Zn(2+) as cofactor.

The protein resides in the cytoplasm. It catalyses the reaction tRNA(Glu) + L-glutamate + ATP = L-glutamyl-tRNA(Glu) + AMP + diphosphate. In terms of biological role, catalyzes the attachment of glutamate to tRNA(Glu) in a two-step reaction: glutamate is first activated by ATP to form Glu-AMP and then transferred to the acceptor end of tRNA(Glu). This Mannheimia succiniciproducens (strain KCTC 0769BP / MBEL55E) protein is Glutamate--tRNA ligase.